The primary structure comprises 209 residues: Ion-translocating oxidoreductase complex subunit G (209 aa).

The helical transmembrane segment at 9–29 (GLVLAIFACASTGLVAVTHYL) threads the bilayer. The residue at position 175 (Thr-175) is an FMN phosphoryl threonine.

It belongs to the RnfG family. The complex is composed of six subunits: RnfA, RnfB, RnfC, RnfD, RnfE and RnfG. FMN serves as cofactor.

It is found in the cell inner membrane. Its function is as follows. Part of a membrane-bound complex that couples electron transfer with translocation of ions across the membrane. The chain is Ion-translocating oxidoreductase complex subunit G from Vibrio atlanticus (strain LGP32) (Vibrio splendidus (strain Mel32)).